Consider the following 255-residue polypeptide: Tabinhibitin 1 (255 aa).

The signal sequence occupies residues 1–23 (MTSILVSRFLIAALVLQYATSDA). The region spanning 67–211 (LSKINDVRDH…KARALLTCNF (145 aa)) is the SCP domain.

Belongs to the CRISP family. Expressed in salivary glands.

The protein localises to the secreted. Its function is as follows. Inhibits platelet aggregation induced by all agonists tested. May act by competing with fibrinogen for binding to glycoprotein IIb/IIIa (ITGA2B/ITGB3). The protein is Tabinhibitin 1 of Tabanus yao (Horsefly).